The sequence spans 472 residues: Protein translocase subunit SecD (472 aa).

Transmembrane regions (helical) follow at residues 7-27 (LLLL…KLPL), 298-318 (LVAG…YYRL), 326-345 (SLMI…GVTL), 349-368 (GIAG…VLIF), 392-414 (AFSS…FWFG), and 432-452 (SLFT…LSLP).

Belongs to the SecD/SecF family. SecD subfamily. As to quaternary structure, forms a complex with SecF. Part of the essential Sec protein translocation apparatus which comprises SecA, SecYEG and auxiliary proteins SecDF. Other proteins may also be involved.

It localises to the cell inner membrane. Part of the Sec protein translocase complex. Interacts with the SecYEG preprotein conducting channel. SecDF uses the proton motive force (PMF) to complete protein translocation after the ATP-dependent function of SecA. Its function is as follows. Probably participates in protein translocation into and across both the cytoplasmic and thylakoid membranes in cyanobacterial cells. This chain is Protein translocase subunit SecD, found in Synechocystis sp. (strain ATCC 27184 / PCC 6803 / Kazusa).